Here is a 336-residue protein sequence, read N- to C-terminus: Nicotinate-nucleotide--dimethylbenzimidazole phosphoribosyltransferase (336 aa).

Glu-304 functions as the Proton acceptor in the catalytic mechanism.

This sequence belongs to the CobT family.

The enzyme catalyses 5,6-dimethylbenzimidazole + nicotinate beta-D-ribonucleotide = alpha-ribazole 5'-phosphate + nicotinate + H(+). It participates in nucleoside biosynthesis; alpha-ribazole biosynthesis; alpha-ribazole from 5,6-dimethylbenzimidazole: step 1/2. Catalyzes the synthesis of alpha-ribazole-5'-phosphate from nicotinate mononucleotide (NAMN) and 5,6-dimethylbenzimidazole (DMB). The protein is Nicotinate-nucleotide--dimethylbenzimidazole phosphoribosyltransferase of Ruegeria sp. (strain TM1040) (Silicibacter sp.).